Here is a 489-residue protein sequence, read N- to C-terminus: 2-(3-amino-3-carboxypropyl)histidine synthase subunit 2 (489 aa).

M1 carries the N-acetylmethionine modification. S7 is modified (phosphoserine). Residues C89, C110, and C341 each contribute to the [4Fe-4S] cluster site. S446 carries the post-translational modification Phosphoserine. A Phosphothreonine modification is found at T467. The residue at position 488 (S488) is a Phosphoserine.

This sequence belongs to the DPH1/DPH2 family. DPH2 subfamily. In terms of assembly, component of the 2-(3-amino-3-carboxypropyl)histidine synthase complex composed of DPH1, DPH2, DPH3 and a NADH-dependent reductase. Interacts with DPH1. [4Fe-4S] cluster is required as a cofactor.

The protein operates within protein modification; peptidyl-diphthamide biosynthesis. Its function is as follows. Required for the first step of diphthamide biosynthesis, a post-translational modification of histidine which occurs in elongation factor 2. DPH1 and DPH2 transfer a 3-amino-3-carboxypropyl (ACP) group from S-adenosyl-L-methionine (SAM) to a histidine residue, the reaction is assisted by a reduction system comprising DPH3 and a NADH-dependent reductase. Facilitates the reduction of the catalytic iron-sulfur cluster found in the DPH1 subunit. This is 2-(3-amino-3-carboxypropyl)histidine synthase subunit 2 (Dph2) from Mus musculus (Mouse).